The chain runs to 777 residues: Large T antigen (777 aa).

Position 1 is an N-acetylmethionine; by host (Met-1). A J domain is found at 12–75 (RLLELLKLPR…VYNLRMNLGG (64 aa)). The LXCXE motif signature appears at 137–141 (LFCYE). The tract at residues 140–287 (YEEPLLSPNP…AREDPAPSDF (148 aa)) is disordered. Over residues 194–204 (ATGGGGGGVHA) the composition is skewed to gly residues. 2 stretches are compositionally biased toward low complexity: residues 228–242 (SQGG…DSSG) and 259–269 (ESYSQSCSQSS). Position 273 is a phosphothreonine; by host (Thr-273). Residues 274–281 (PPKKARED) carry the Nuclear localization signal motif. A DNA-binding region (T-ag OBD) is located at residues 288–402 (PSSLTGYLSH…TENKPGLHQF (115 aa)). A T-ag D1-type zinc finger spans residues 411–505 (QKAVDWIMVA…RRLKLVECTR (95 aa)). 4 residues coordinate Zn(2+): Cys-448, Cys-451, His-461, and His-465. The SF3 helicase domain occupies 544–704 (DFPQTLFKML…PHLAQALEKC (161 aa)). 570–577 (GPVNSGKT) provides a ligand contact to ATP.

As to quaternary structure, forms homohexamers in the presence of ATP. Interacts with host HDAC1. Interacts (via LXCXE domain) with host RB1; the interaction induces the aberrant dissociation of RB1-E2F1 complex thereby disrupting RB1's activity. Interacts (via LXCXE domain) with host pRB-related proteins RBL1 and RBL2. Interacts (via C-terminus) with host TOP1 and POLA1 allowing DNA replication. Interacts with host preinitiation complex components TBP, TFIIA and TFIID to regulate transcription initiation. It depends on Mg(2+) as a cofactor. Phosphorylated on both serine and threonine residues. Small t antigen inhibits the dephosphorylation by the AC form of PP2A. In terms of processing, O-Glycosylated near the C-terminal region. Post-translationally, acetylated by CBP in a TP53-dependent manner.

Its subcellular location is the host nucleus. The enzyme catalyses Couples ATP hydrolysis with the unwinding of duplex DNA by translocating in the 3'-5' direction.. The catalysed reaction is ATP + H2O = ADP + phosphate + H(+). Isoform large T antigen is a key early protein essential for both driving viral replication and inducing cellular transformation. Plays a role in viral genome replication by driving entry of quiescent cells into the cell cycle and by autoregulating the synthesis of viral early mRNA. Displays highly oncogenic activities by corrupting the host cellular checkpoint mechanisms that guard cell division and the transcription, replication, and repair of DNA. Participates in the modulation of cellular gene expression preceeding viral DNA replication. This step involves binding to host key cell cycle regulators retinoblastoma protein RB1/pRb and TP53. Induces the disassembly of host E2F1 transcription factors from RB1, thus promoting transcriptional activation of E2F1-regulated S-phase genes. Inhibits host TP53 binding to DNA, abrogating the ability of TP53 to stimulate gene expression. Plays the role of a TFIID-associated factor (TAF) in transcription initiation for all three RNA polymerases, by stabilizing the TBP-TFIIA complex on promoters. Initiates viral DNA replication and unwinding via interactions with the viral origin of replication. Binds two adjacent sites in the SV40 origin. The replication fork movement is facilitated by Large T antigen helicase activity. Has processive 3'-5' DNA helicase activity which requires a short 3' single-stranded region and ATP. Activates the transcription of viral late mRNA, through host TBP and TFIIA stabilization. Interferes with histone deacetylation mediated by HDAC1, leading to activation of transcription. The protein is Large T antigen of Murine polyomavirus (strain Crawford small-plaque) (MPyV).